Here is a 117-residue protein sequence, read N- to C-terminus: Appetite-regulating hormone (117 aa).

The signal sequence occupies residues 1–23 (MPSPGTVCSLLLLGMLWLDLAMA). Serine 26 is lipidated: O-decanoyl serine; alternate. Residue serine 26 is the site of O-hexanoyl serine; alternate attachment. A lipid anchor (O-octanoyl serine; alternate) is attached at serine 26. The tract at residues 29-50 (SPEHQRVQQRKESKKPPAKLQP) is disordered. Basic and acidic residues predominate over residues 31-43 (EHQRVQQRKESKK). Positions 52-75 (ALAGWLRPEDGGQAEGAEDELEVR) are cleaved as a propeptide — removed in mature form. Leucine 98 bears the Leucine amide mark. The propeptide at 99–117 (GKFLQDILWEEAKEAPADK) is removed in mature form.

Belongs to the motilin family. Post-translationally, O-octanoylated by GOAT/MBOAT4. O-octanoylation or O-decanoylation is essential for ghrelin activity. The O-decanoylated forms Ghrelin-27-C10 and Ghrelin-28-C10 differ in the length of the carbon backbone of the carboxylic acid bound to Ser-26. A small fraction of ghrelin, ghrelin-28-C10:1, may be modified with a singly unsaturated carboxylic acid. Also O-acetylated and O-butyrylated on Ser-26 to minor levels. Amidation of Leu-98 is essential for obestatin activity. As to expression, highest level in stomach. All forms are found in serum as well. Other tissues compensate for the loss of ghrelin synthesis in the stomach following gastrectomy.

It localises to the secreted. In terms of biological role, ghrelin is the ligand for growth hormone secretagogue receptor type 1 (GHSR). Induces the release of growth hormone from the pituitary. Has an appetite-stimulating effect, induces adiposity and stimulates gastric acid secretion. Involved in growth regulation. Its function is as follows. May be the ligand for GPR39. May have an appetite-reducing effect resulting in decreased food intake. May reduce gastric emptying activity and jejunal motility. The polypeptide is Appetite-regulating hormone (GHRL) (Homo sapiens (Human)).